Consider the following 459-residue polypeptide: Zinc finger protein 213 (459 aa).

The 82-residue stretch at 45 to 126 (RQRFRQFCYG…VALVEDLQKQ (82 aa)) folds into the SCAN box domain. Residues 128–188 (VKAWRQDVPS…ALLKEGRPGE (61 aa)) form a disordered region. In terms of domain architecture, KRAB spans 202-292 (VALGDIPFYF…ENRPRAALGP (91 aa)). C2H2-type zinc fingers lie at residues 317-339 (HSCGQCGKRFRWGSDLARHQRTH), 345-367 (HKCPECDKSFRSSSDLVRHQGVH), 373-395 (FSCSECGKSFSRSAYLADHQRIH), 401-423 (FGCSDCGKSFSLRSYLLDHRRVH), and 429-451 (FGCGECDKSFKQRAHLIAHQSLH).

It belongs to the krueppel C2H2-type zinc-finger protein family. Widely expressed with highest levels in testis.

The protein resides in the nucleus. In terms of biological role, may be involved in transcriptional regulation. In Homo sapiens (Human), this protein is Zinc finger protein 213 (ZNF213).